Here is a 371-residue protein sequence, read N- to C-terminus: MSNPLSELSAAGVAVWLDDISRDRLRTGNLADLVANRSVVGVTSNPTIFQKAIASSDLYNEQLRDLKVRGVDVGEAVRAITAADVREACDVLRGVYDASGGVDGRVSLEVDPRLAHEAERTVAEARALWWLVDRPNLFIKIPATQDGLPAITETLAQGISVNVTLIFGLDRYDAVIDAFMSGVEQAIEAGRDVSDLASVASFFVSRVDSEVDARLDKIGTPEAKALHAKTAIANARLAYERYEKAFATPRWKALAAKGAKPQRPLWASTSTKDPSLPDTIYVSELIAPGTVNTMPEATLQAFADHGQVKGETIRPHYDDARQVFAALAAVGVDIDDVIETLETQGVQKFEDSWNQLLGTIAQQLGRSGTDG.

Catalysis depends on Lys-140, which acts as the Schiff-base intermediate with substrate.

This sequence belongs to the transaldolase family. Type 2 subfamily.

The protein localises to the cytoplasm. The enzyme catalyses D-sedoheptulose 7-phosphate + D-glyceraldehyde 3-phosphate = D-erythrose 4-phosphate + beta-D-fructose 6-phosphate. The protein operates within carbohydrate degradation; pentose phosphate pathway; D-glyceraldehyde 3-phosphate and beta-D-fructose 6-phosphate from D-ribose 5-phosphate and D-xylulose 5-phosphate (non-oxidative stage): step 2/3. Its function is as follows. Transaldolase is important for the balance of metabolites in the pentose-phosphate pathway. This chain is Transaldolase, found in Frankia alni (strain DSM 45986 / CECT 9034 / ACN14a).